The sequence spans 666 residues: Nuclear distribution protein nudE homolog 1 (666 aa).

A coiled-coil region spans residues 14–195; sequence EEEIAHYREK…KDQLARAIAT (182 aa). Disordered regions lie at residues 40-64, 220-310, 369-388, and 397-666; these read EFQQ…KQQA, DDIN…SGIP, KRVT…PAPH, and DHNT…KVKK. The segment covering 251–274 has biased composition (polar residues); that stretch reads RSGTMSSIPVASPSTKRFSQQIPH. Composition is skewed to low complexity over residues 275–287 and 372–383; these read SPSF…STTS and TSTTSTTSSTTT. The span at 400-410 shows a compositional bias: polar residues; the sequence is TTPTAQSQQFP. Low complexity-rich tracts occupy residues 449–465, 473–485, and 536–554; these read PTFR…LPSR, ASGS…SGTA, and SATP…STSN. Composition is skewed to polar residues over residues 587-599 and 614-638; these read RQSL…TPTT and SSLS…SGRP.

This sequence belongs to the nudE family. As to quaternary structure, self-associates. Interacts with PAC1.

Its subcellular location is the cytoplasm. The protein localises to the cytoskeleton. Functionally, required for nuclear migration. The sequence is that of Nuclear distribution protein nudE homolog 1 (NDE1) from Cryptococcus neoformans var. neoformans serotype D (strain JEC21 / ATCC MYA-565) (Filobasidiella neoformans).